We begin with the raw amino-acid sequence, 144 residues long: Transcription antitermination protein NusB (144 aa).

This sequence belongs to the NusB family.

Involved in transcription antitermination. Required for transcription of ribosomal RNA (rRNA) genes. Binds specifically to the boxA antiterminator sequence of the ribosomal RNA (rrn) operons. In Histophilus somni (strain 129Pt) (Haemophilus somnus), this protein is Transcription antitermination protein NusB.